A 448-amino-acid chain; its full sequence is MRKTHINVIGAGLAGSEAAYQIAKRGIPVKIYEMRGLKQTPQHKTEKFAELVCSNSLRGAAITNAVGLLKEEMRRLDSVIIKAAEYTQVPAGGALAVDREGFSDFVTREVSNHPLVEVIREEITDIPQDELTIIATGPLTSDSLANKIREFNGADGFYFYDAAAPIIDANSINFDKVYKKSRYDKGEADYINCPMTKEEFQAFQEALISAEEAPLNSFEDLKVFEGCMPIEEMAKRGYKTMLFGPMKPVGLEYPYEYKGPRDGEFRTPYAVVQLRQDNASASLYNIVGFQTHLKWGEQKRVFQMIPGLENAEFVRYGVMHRNSYMDSPNLLKQTFQSRKQENLFFAGQMTGVEGYVESAASGLVAGINAAKLFNDEEVVIFPKTTAIGSLPYYITHTDSKHFQPMNVTFGIVEELDGPRIRDKKERYTKVAERSLNTLTDIISKENLA.

10-15 (GAGLAG) contributes to the FAD binding site.

It belongs to the MnmG family. TrmFO subfamily. The cofactor is FAD.

It localises to the cytoplasm. It carries out the reaction uridine(54) in tRNA + (6R)-5,10-methylene-5,6,7,8-tetrahydrofolate + NADH + H(+) = 5-methyluridine(54) in tRNA + (6S)-5,6,7,8-tetrahydrofolate + NAD(+). The enzyme catalyses uridine(54) in tRNA + (6R)-5,10-methylene-5,6,7,8-tetrahydrofolate + NADPH + H(+) = 5-methyluridine(54) in tRNA + (6S)-5,6,7,8-tetrahydrofolate + NADP(+). Catalyzes the folate-dependent formation of 5-methyl-uridine at position 54 (M-5-U54) in all tRNAs. The polypeptide is Methylenetetrahydrofolate--tRNA-(uracil-5-)-methyltransferase TrmFO (Lactococcus lactis subsp. cremoris (strain SK11)).